A 456-amino-acid polypeptide reads, in one-letter code: Hydroxymethylglutaryl coenzyme A synthase (456 aa).

A (3S)-3-hydroxy-3-methylglutaryl-CoA-binding site is contributed by alanine 34. Residue glutamate 85 is the Proton donor/acceptor of the active site. (3S)-3-hydroxy-3-methylglutaryl-CoA is bound by residues cysteine 119, threonine 161, serine 211, histidine 258, lysine 267, asparagine 335, and serine 369. Residue cysteine 119 is the Acyl-thioester intermediate of the active site. Residue histidine 258 is the Proton donor/acceptor of the active site.

This sequence belongs to the thiolase-like superfamily. HMG-CoA synthase family.

It carries out the reaction acetoacetyl-CoA + acetyl-CoA + H2O = (3S)-3-hydroxy-3-methylglutaryl-CoA + CoA + H(+). In terms of biological role, HMG-CoA synthase; part of the gene cluster that mediates the biosynthesis of 1233A, a natural compound known as an inhibitor of HMG-CoA synthase in the mevalonate pathway and with antibacterial and antifungal activities. This enzyme condenses acetyl-CoA with acetoacetyl-CoA to form HMG-CoA, which is the substrate for HMG-CoA reductase. As part of the 1233A biosynthesis cluster, is involved in conferring self-resistance to 1233A. The polypeptide is Hydroxymethylglutaryl coenzyme A synthase (Fusarium sp).